A 209-amino-acid polypeptide reads, in one-letter code: GTP cyclohydrolase-2 (209 aa).

Arg-49–Glu-53 is a GTP binding site. Cys-54, Cys-65, and Cys-67 together coordinate Zn(2+). GTP-binding positions include Gln-70, Glu-92–Arg-94, and Thr-114. The active-site Proton acceptor is the Asp-126. Arg-128 acts as the Nucleophile in catalysis. GTP-binding residues include Thr-149 and Lys-154.

The protein belongs to the GTP cyclohydrolase II family. Requires Zn(2+) as cofactor.

It catalyses the reaction GTP + 4 H2O = 2,5-diamino-6-hydroxy-4-(5-phosphoribosylamino)-pyrimidine + formate + 2 phosphate + 3 H(+). Its pathway is cofactor biosynthesis; riboflavin biosynthesis; 5-amino-6-(D-ribitylamino)uracil from GTP: step 1/4. Catalyzes the conversion of GTP to 2,5-diamino-6-ribosylamino-4(3H)-pyrimidinone 5'-phosphate (DARP), formate and pyrophosphate. This is GTP cyclohydrolase-2 from Shewanella halifaxensis (strain HAW-EB4).